The following is a 1843-amino-acid chain: Proteasome activator complex subunit 4 (1843 aa).

Over residues M1–E11 the composition is skewed to low complexity. A disordered region spans residues M1–G25. Positions P12–G22 are enriched in pro residues. HEAT repeat units lie at residues P475–C519 and N998–G1037. S1121 carries the post-translational modification Phosphoserine. 2 HEAT repeats span residues R1179–R1217 and D1354–H1392. At S1614 the chain carries Phosphoserine. 2 HEAT repeats span residues P1636–F1674 and E1680–L1718. The segment at A1650–K1738 is bromodomain-like (BRDL). Phosphoserine is present on S1746.

Belongs to the BLM10 family. Homodimer. Interacts with the 20S and 26S proteasomes. Component of the spermatoproteasome, a form of the proteasome specifically found in testis.

Its subcellular location is the cytoplasm. It localises to the cytosol. It is found in the nucleus. The protein localises to the nucleus speckle. Functionally, associated component of the proteasome that specifically recognizes acetylated histones and promotes ATP- and ubiquitin-independent degradation of core histones during spermatogenesis and DNA damage response. Recognizes and binds acetylated histones via its bromodomain-like (BRDL) region and activates the proteasome by opening the gated channel for substrate entry. Binds to the core proteasome via its C-terminus, which occupies the same binding sites as the proteasomal ATPases, opening the closed structure of the proteasome via an active gating mechanism. Component of the spermatoproteasome, a form of the proteasome specifically found in testis: binds to acetylated histones and promotes degradation of histones, thereby participating actively to the exchange of histones during spermatogenesis. Also involved in DNA damage response in somatic cells, by promoting degradation of histones following DNA double-strand breaks. The protein is Proteasome activator complex subunit 4 of Homo sapiens (Human).